A 259-amino-acid polypeptide reads, in one-letter code: Ribosomal RNA small subunit methyltransferase J (259 aa).

S-adenosyl-L-methionine contacts are provided by residues 101–102 (RD), 117–118 (ER), 153–154 (SS), and D176.

This sequence belongs to the methyltransferase superfamily. RsmJ family.

The protein resides in the cytoplasm. It catalyses the reaction guanosine(1516) in 16S rRNA + S-adenosyl-L-methionine = N(2)-methylguanosine(1516) in 16S rRNA + S-adenosyl-L-homocysteine + H(+). Functionally, specifically methylates the guanosine in position 1516 of 16S rRNA. The chain is Ribosomal RNA small subunit methyltransferase J from Vibrio campbellii (strain ATCC BAA-1116).